We begin with the raw amino-acid sequence, 548 residues long: Sesquiterpene synthase 9 (548 aa).

3 residues coordinate Mg(2+): aspartate 300, aspartate 304, and glutamate 453. The DDXXD motif motif lies at 300 to 304 (DDTFD).

It belongs to the terpene synthase family. Tpsa subfamily. Mg(2+) is required as a cofactor. Mn(2+) serves as cofactor. Mostly expressed in stem and trichomes, to a lower extent in roots, leaves and flowers and, at low levels, in fruits.

Its subcellular location is the cytoplasm. It catalyses the reaction (2E,6E)-farnesyl diphosphate = germacrene C + diphosphate. The enzyme catalyses (2E)-geranyl diphosphate = terpinolene + diphosphate. The catalysed reaction is (2E)-geranyl diphosphate = limonene + diphosphate. It carries out the reaction (2E)-geranyl diphosphate = beta-myrcene + diphosphate. It catalyses the reaction (2Z,6Z)-farnesyl diphosphate = germacrene C + diphosphate. It participates in secondary metabolite biosynthesis; terpenoid biosynthesis. Functionally, involved in the biosynthesis of germacrene C, one of the most abundant sesquiterpene in the leaf oil of tomato. Produces mainly germacrene C, but also smaller amounts of germacrene A, B and D when used with farnesyl diphosphate (FPP) as substrate; able to use both (2E,6E)-farnesyl diphosphate ((EE)-FPP) and (2Z,6Z)-farnesyl diphosphate ((ZZ)-FPP). No or low activity with geranylgeranyl diphosphate (GGPP). Can act with a low efficiency as a monoterpene synthase with geranyl diphosphate (GPP) as substrate, thus producing beta-myrcene, limonene and terpinolene. The sequence is that of Sesquiterpene synthase 9 from Solanum lycopersicum (Tomato).